A 96-amino-acid polypeptide reads, in one-letter code: Neutrophil defensin 1 (96 aa).

The N-terminal stretch at 1 to 19 is a signal peptide; the sequence is MRTLVILAAILLVALQAQA. Positions 20–66 are excised as a propeptide; sequence EPLQARTDEATAAQEQIPTDNPEVVVSLAWDESLAPKDSVPGLRKNM. Disulfide bonds link cysteine 68–cysteine 96, cysteine 70–cysteine 85, and cysteine 75–cysteine 95. Tyrosine 87 is subject to Phosphotyrosine.

Tetramer. Dimer. Interacts with RETN. ADP-ribosylation drastically reduces cytotoxic and antibacterial activities, and enhances IL8 production.

It localises to the secreted. Functionally, effector molecule of the innate immune system that acts via antibiotic-like properties against a broad array of infectious agents including bacteria, fungi, and viruses or by promoting the activation and maturation of some APCs. Interacts with the essential precursor of cell wall synthesis lipid II to inhibit bacterial cell wall synthesis. Inhibits adenovirus infection via inhibition of viral disassembly at the vertex region, thereby restricting the release of internal capsid protein pVI, which is required for endosomal membrane penetration during cell entry. In addition, interaction with adenovirus capsid leads to the redirection of viral particles to TLR4 thereby promoting a NLRP3-mediated inflammasome response and interleukin 1-beta (IL-1beta) release. Induces the production of proinflammatory cytokines including type I interferon (IFN) in plasmacytoid dendritic cells (pDCs) by triggering the degradation of NFKBIA and nuclear translocation of IRF1, both of which are required for activation of pDCs. This Macaca mulatta (Rhesus macaque) protein is Neutrophil defensin 1.